A 196-amino-acid chain; its full sequence is Putative tyrosine-protein phosphatase OCA1 (196 aa).

The Tyrosine-protein phosphatase domain occupies 33–192; it reads NFCPVEKQLY…SVQIDPTKMP (160 aa). Cys-130 acts as the Phosphocysteine intermediate in catalysis.

The protein belongs to the protein-tyrosine phosphatase family.

The protein localises to the cytoplasm. The catalysed reaction is O-phospho-L-tyrosyl-[protein] + H2O = L-tyrosyl-[protein] + phosphate. Putative tyrosine-protein phosphatase required for protection against superoxide stress. This Debaryomyces hansenii (strain ATCC 36239 / CBS 767 / BCRC 21394 / JCM 1990 / NBRC 0083 / IGC 2968) (Yeast) protein is Putative tyrosine-protein phosphatase OCA1 (OCA1).